Consider the following 137-residue polypeptide: Small ribosomal subunit protein uS12 (137 aa).

Belongs to the universal ribosomal protein uS12 family. Part of the 30S ribosomal subunit. Contacts proteins S8 and S17. May interact with IF1 in the 30S initiation complex.

In terms of biological role, with S4 and S5 plays an important role in translational accuracy. Its function is as follows. Interacts with and stabilizes bases of the 16S rRNA that are involved in tRNA selection in the A site and with the mRNA backbone. Located at the interface of the 30S and 50S subunits, it traverses the body of the 30S subunit contacting proteins on the other side and probably holding the rRNA structure together. The combined cluster of proteins S8, S12 and S17 appears to hold together the shoulder and platform of the 30S subunit. This Lactiplantibacillus plantarum (strain ATCC BAA-793 / NCIMB 8826 / WCFS1) (Lactobacillus plantarum) protein is Small ribosomal subunit protein uS12.